The following is a 273-amino-acid chain: 4-diphosphocytidyl-2-C-methyl-D-erythritol kinase (273 aa).

The active site involves Lys-9. Pro-90–Ala-100 is a binding site for ATP. Asp-129 is a catalytic residue.

The protein belongs to the GHMP kinase family. IspE subfamily.

The enzyme catalyses 4-CDP-2-C-methyl-D-erythritol + ATP = 4-CDP-2-C-methyl-D-erythritol 2-phosphate + ADP + H(+). Its pathway is isoprenoid biosynthesis; isopentenyl diphosphate biosynthesis via DXP pathway; isopentenyl diphosphate from 1-deoxy-D-xylulose 5-phosphate: step 3/6. Catalyzes the phosphorylation of the position 2 hydroxy group of 4-diphosphocytidyl-2C-methyl-D-erythritol. In Erythrobacter litoralis (strain HTCC2594), this protein is 4-diphosphocytidyl-2-C-methyl-D-erythritol kinase.